The primary structure comprises 128 residues: NHP2-like protein 1 (128 aa).

The segment at 36-48 is interaction with U4 snRNA and U4atac snRNA; it reads RKGANEATKTLNR. Residues 96–128 form an important for U4 snRNA-binding region; it reads SRPVIACSVTIKEGSQLKPQIQSVQQAIERLLV.

It belongs to the eukaryotic ribosomal protein eL8 family. Identified in the spliceosome B complex. Component of the U4/U6-U5 tri-snRNP complex. Part of the small subunit (SSU) processome, composed of more than 70 proteins and the RNA chaperone small nucleolar RNA (snoRNA) U3.

The protein resides in the nucleus. It is found in the nucleolus. Functionally, part of the small subunit (SSU) processome, first precursor of the small eukaryotic ribosomal subunit. During the assembly of the SSU processome in the nucleolus, many ribosome biogenesis factors, an RNA chaperone and ribosomal proteins associate with the nascent pre-rRNA and work in concert to generate RNA folding, modifications, rearrangements and cleavage as well as targeted degradation of pre-ribosomal RNA by the RNA exosome. Involved in pre-mRNA splicing as component of the spliceosome. Binds to the 5'-stem-loop of U4 snRNA and thereby contributes to spliceosome assembly. The protein undergoes a conformational change upon RNA-binding. Core component of box C/D small nucleolar ribonucleoprotein (snoRNP) complexes that function in methylation of multiple sites on ribosomal RNAs (rRNAs) and messenger RNAs (mRNAs). This Xenopus laevis (African clawed frog) protein is NHP2-like protein 1.